Consider the following 652-residue polypeptide: Sciellin (652 aa).

Residues 1–10 are compositionally biased toward basic residues; sequence MSNFSSRKKS. Disordered regions lie at residues 1–29 and 43–180; these read MSNFSSRKKSPTGNDLKSARGAELRQQGF and SWIK…KPLG. Residues 66–95 are compositionally biased toward basic and acidic residues; it reads NSHDALDRKLIERDEPKATISRYRSEDMLD. Residue Lys82 is modified to N6-acetyllysine. Over residues 97 to 110 the composition is skewed to polar residues; the sequence is TLSSFRTPQSTKTP. Residues 111 to 130 show a composition bias toward low complexity; that stretch reads AVSSFNANTTATASTPATTP. Over residues 161 to 170 the composition is skewed to pro residues; the sequence is LHPPLPPKPC. 15 consecutive repeat copies span residues 207-226, 227-241, 242-261, 262-281, 282-301, 302-320, 321-340, 341-360, 361-380, 381-398, 399-418, 419-438, 439-458, 459-477, and 478-496. A 15 X approximate tandem repeats region spans residues 207 to 496; it reads TEDLDDIIRV…VNSHVAEKNG (290 aa). Ser264 bears the Phosphoserine mark. Ser343 is subject to Phosphoserine. The disordered stretch occupies residues 353–385; the sequence is EVNRSNKGGPSLDNFTKGVPARSRANQRDQDLD. Positions 436 to 455 are disordered; it reads NQRNHDVDSTIRGNPTGTRC. The span at 446–455 shows a compositional bias: polar residues; the sequence is IRGNPTGTRC. Residues 583–649 enclose the LIM zinc-binding domain; that stretch reads DMCTYCRKPL…EPCYSKVMAK (67 aa).

In terms of tissue distribution, expressed in the upper layers of stratified epithelia, including, ependyma and choroid plexus of the brain ventricles.

It localises to the cytoplasm. Its subcellular location is the membrane. Its function is as follows. May function in the assembly or regulation of proteins in the cornified envelope. The LIM domain may be involved in homotypic or heterotypic associations and may function to localize sciellin to the cornified envelope. This chain is Sciellin (Scel), found in Mus musculus (Mouse).